A 168-amino-acid chain; its full sequence is RNA pyrophosphohydrolase (168 aa).

The region spanning 8–159 is the Nudix hydrolase domain; that stretch reads PYRTCVGVML…KRPVYERVVK (152 aa). The short motif at 47–68 is the Nudix box element; that stretch reads GGVDPGEDTWKAAKRELYEETS.

It belongs to the Nudix hydrolase family. RppH subfamily. Requires a divalent metal cation as cofactor.

Accelerates the degradation of transcripts by removing pyrophosphate from the 5'-end of triphosphorylated RNA, leading to a more labile monophosphorylated state that can stimulate subsequent ribonuclease cleavage. The chain is RNA pyrophosphohydrolase from Rhodopseudomonas palustris (strain ATCC BAA-98 / CGA009).